A 124-amino-acid polypeptide reads, in one-letter code: Small ribosomal subunit protein uS12c (124 aa).

Residues 105–124 form a disordered region; the sequence is AGVKDRRQSRSKYGAKRPKA. Residues 113–124 show a composition bias toward basic residues; the sequence is SRSKYGAKRPKA.

Belongs to the universal ribosomal protein uS12 family. In terms of assembly, part of the 30S ribosomal subunit.

The protein localises to the plastid. The protein resides in the cyanelle. Its function is as follows. With S4 and S5 plays an important role in translational accuracy. Located at the interface of the 30S and 50S subunits. In Cyanophora paradoxa, this protein is Small ribosomal subunit protein uS12c (rps12).